A 90-amino-acid chain; its full sequence is Small ribosomal subunit protein bS20 (90 aa).

The protein belongs to the bacterial ribosomal protein bS20 family.

Its function is as follows. Binds directly to 16S ribosomal RNA. This Desulfitobacterium hafniense (strain DSM 10664 / DCB-2) protein is Small ribosomal subunit protein bS20.